Here is an 883-residue protein sequence, read N- to C-terminus: Serine/threonine-protein kinase greatwall (883 aa).

Met1 bears the N-acetylmethionine mark. The disordered stretch occupies residues 1 to 23; it reads MEPTMGGEMESGGGAATGECVNR. The Protein kinase domain maps to 35-839; sequence FTIVKPISRG…MKELKHHPLF (805 aa). ATP-binding positions include 41–49 and Lys62; that span reads ISRGAFGKV. The Proton acceptor role is filled by Asp156. Phosphothreonine occurs at positions 209 and 224. Ser295 carries the phosphoserine modification. The segment at 298 to 317 is disordered; the sequence is RLATSSTSSPSHTFISSMES. Residues 301 to 314 are compositionally biased toward low complexity; that stretch reads TSSTSSPSHTFISS. A phosphoserine mark is found at Ser373 and Ser456. The disordered stretch occupies residues 511-530; the sequence is ENVGSSFTDKHQTPEKSPVP. Thr523 carries the post-translational modification Phosphothreonine. A phosphoserine mark is found at Ser556 and Ser560. Positions 569–597 are disordered; sequence IHMDSDSSFPGISIMESPLGGQSLDPDKN. 3 positions are modified to phosphoserine: Ser635, Ser661, and Ser672. The segment at 706–737 is disordered; the sequence is RSDMPYQQTPNQVKSETPYRTPKSVRRGAAPV. The span at 710 to 720 shows a compositional bias: polar residues; it reads PYQQTPNQVKS. Thr726 carries the post-translational modification Phosphothreonine. Phosphoserine is present on Ser729. At Thr745 the chain carries Phosphothreonine; by CDK1. In terms of domain architecture, AGC-kinase C-terminal spans 840–883; sequence SGVDWENLQHQKMPFIPQPDDETDTSYFEARNNAQHLTVSGFSL. Phosphoserine is present on residues Ser879 and Ser882.

It belongs to the protein kinase superfamily. AGC Ser/Thr protein kinase family. Phosphorylation at Thr-745 by CDK1 during M phase activates its kinase activity. Maximum phosphorylation occurs in prometaphase.

It localises to the cytoplasm. Its subcellular location is the cytoskeleton. The protein resides in the microtubule organizing center. It is found in the centrosome. The protein localises to the nucleus. It catalyses the reaction L-seryl-[protein] + ATP = O-phospho-L-seryl-[protein] + ADP + H(+). The enzyme catalyses L-threonyl-[protein] + ATP = O-phospho-L-threonyl-[protein] + ADP + H(+). Functionally, serine/threonine kinase that plays a key role in M phase by acting as a regulator of mitosis entry and maintenance. Acts by promoting the inactivation of protein phosphatase 2A (PP2A) during M phase: does not directly inhibit PP2A but acts by mediating phosphorylation and subsequent activation of ARPP19 and ENSA at 'Ser-62' and 'Ser-67', respectively. ARPP19 and ENSA are phosphatase inhibitors that specifically inhibit the PPP2R2D (PR55-delta) subunit of PP2A. Inactivation of PP2A during M phase is essential to keep cyclin-B1-CDK1 activity high. Following DNA damage, it is also involved in checkpoint recovery by being inhibited. This Bos taurus (Bovine) protein is Serine/threonine-protein kinase greatwall (MASTL).